Reading from the N-terminus, the 186-residue chain is Peptidyl-tRNA hydrolase (186 aa).

Tyr-17 is a binding site for tRNA. His-22 serves as the catalytic Proton acceptor. Residues Tyr-64 and Asn-66 each contribute to the tRNA site.

It belongs to the PTH family. As to quaternary structure, monomer.

The protein resides in the cytoplasm. It catalyses the reaction an N-acyl-L-alpha-aminoacyl-tRNA + H2O = an N-acyl-L-amino acid + a tRNA + H(+). Hydrolyzes ribosome-free peptidyl-tRNAs (with 1 or more amino acids incorporated), which drop off the ribosome during protein synthesis, or as a result of ribosome stalling. Its function is as follows. Catalyzes the release of premature peptidyl moieties from peptidyl-tRNA molecules trapped in stalled 50S ribosomal subunits, and thus maintains levels of free tRNAs and 50S ribosomes. This Methylacidiphilum infernorum (isolate V4) (Methylokorus infernorum (strain V4)) protein is Peptidyl-tRNA hydrolase.